The following is a 437-amino-acid chain: Asparagine--tRNA ligase (437 aa).

Belongs to the class-II aminoacyl-tRNA synthetase family. As to quaternary structure, homodimer.

Its subcellular location is the cytoplasm. It catalyses the reaction tRNA(Asn) + L-asparagine + ATP = L-asparaginyl-tRNA(Asn) + AMP + diphosphate + H(+). The chain is Asparagine--tRNA ligase from Symbiobacterium thermophilum (strain DSM 24528 / JCM 14929 / IAM 14863 / T).